The sequence spans 126 residues: Aspartate 1-decarboxylase (126 aa).

Ser-25 (schiff-base intermediate with substrate; via pyruvic acid) is an active-site residue. Position 25 is a pyruvic acid (Ser) (Ser-25). Residue Thr-57 participates in substrate binding. Tyr-58 functions as the Proton donor in the catalytic mechanism. Residue 73 to 75 coordinates substrate; sequence GAA.

The protein belongs to the PanD family. In terms of assembly, heterooctamer of four alpha and four beta subunits. The cofactor is pyruvate. Post-translationally, is synthesized initially as an inactive proenzyme, which is activated by self-cleavage at a specific serine bond to produce a beta-subunit with a hydroxyl group at its C-terminus and an alpha-subunit with a pyruvoyl group at its N-terminus.

It localises to the cytoplasm. The enzyme catalyses L-aspartate + H(+) = beta-alanine + CO2. Its pathway is cofactor biosynthesis; (R)-pantothenate biosynthesis; beta-alanine from L-aspartate: step 1/1. Catalyzes the pyruvoyl-dependent decarboxylation of aspartate to produce beta-alanine. In Alkalilimnicola ehrlichii (strain ATCC BAA-1101 / DSM 17681 / MLHE-1), this protein is Aspartate 1-decarboxylase.